Consider the following 305-residue polypeptide: Deoxyribonuclease gamma (305 aa).

An N-terminal signal peptide occupies residues 1–20 (MSRELAPLLLLLLSIHSALA). Positions 35-51 (KQEDKNAMDVIVKVIKR) match the Bipartite nuclear localization signal motif. Active-site residues include Glu100 and His155. Cys194 and Cys231 are disulfide-bonded. Residues 284-305 (SRAFTNSKKSVTLRKKTKSKRS) are not required for free DNA-nuclease activity but required for activity towards liposome-coated DNA. Residues 296–304 (LRKKTKSKR) carry the Nuclear localization signal motif.

The protein belongs to the DNase I family. Requires Ca(2+) as cofactor. It depends on Mg(2+) as a cofactor. Poly-ADP-ribosylated by PARP1. ADP-ribosylation negatively regulates enzymatic activity during apoptosis. In terms of tissue distribution, liver and spleen.

It localises to the nucleus. It is found in the endoplasmic reticulum. The protein resides in the secreted. Inhibited by zinc. Functionally, has DNA hydrolytic activity. Is capable of both single- and double-stranded DNA cleavage, producing DNA fragments with 3'-OH ends. Can cleave chromatin to nucleosomal units and cleaves nucleosomal and liposome-coated DNA. Acts in internucleosomal DNA fragmentation (INDF) during apoptosis and necrosis. The role in apoptosis includes myogenic and neuronal differentiation, and BCR-mediated clonal deletion of self-reactive B cells. Is active on chromatin in apoptotic cell-derived membrane-coated microparticles and thus suppresses anti-DNA autoimmunity. Together with DNASE1, plays a key role in degrading neutrophil extracellular traps (NETs). NETs are mainly composed of DNA fibers and are released by neutrophils to bind pathogens during inflammation. Degradation of intravascular NETs by DNASE1 and DNASE1L3 is required to prevent formation of clots that obstruct blood vessels and cause organ damage following inflammation. The sequence is that of Deoxyribonuclease gamma from Homo sapiens (Human).